Consider the following 125-residue polypeptide: U-scoloptoxin(05)-Er1a (125 aa).

The first 20 residues, Met1 to Gly20, serve as a signal peptide directing secretion.

The protein belongs to the scoloptoxin-05 family. Contains 4 disulfide bonds. Expressed by the venom gland.

It localises to the secreted. This Ethmostigmus rubripes (Giant centipede) protein is U-scoloptoxin(05)-Er1a.